Reading from the N-terminus, the 449-residue chain is Glucose-6-phosphate isomerase (449 aa).

Glu291 serves as the catalytic Proton donor. Residues His312 and Lys426 contribute to the active site.

This sequence belongs to the GPI family.

Its subcellular location is the cytoplasm. It catalyses the reaction alpha-D-glucose 6-phosphate = beta-D-fructose 6-phosphate. The protein operates within carbohydrate biosynthesis; gluconeogenesis. It participates in carbohydrate degradation; glycolysis; D-glyceraldehyde 3-phosphate and glycerone phosphate from D-glucose: step 2/4. Functionally, catalyzes the reversible isomerization of glucose-6-phosphate to fructose-6-phosphate. The chain is Glucose-6-phosphate isomerase from Enterococcus faecalis (strain ATCC 700802 / V583).